Reading from the N-terminus, the 253-residue chain is Probable transcriptional regulatory protein Tery_2125 (253 aa).

This sequence belongs to the TACO1 family.

The protein localises to the cytoplasm. In Trichodesmium erythraeum (strain IMS101), this protein is Probable transcriptional regulatory protein Tery_2125.